Here is a 338-residue protein sequence, read N- to C-terminus: Anthranilate phosphoribosyltransferase (338 aa).

5-phospho-alpha-D-ribose 1-diphosphate is bound by residues Gly-81, 84-85, Ser-89, 91-94, 109-117, and Ala-121; these read GD, NVST, and KHGNRALSS. Anthranilate is bound at residue Gly-81. Ser-93 contributes to the Mg(2+) binding site. Asn-112 serves as a coordination point for anthranilate. Arg-167 is a binding site for anthranilate. Asp-226 and Glu-227 together coordinate Mg(2+).

It belongs to the anthranilate phosphoribosyltransferase family. Homodimer. Mg(2+) serves as cofactor.

It catalyses the reaction N-(5-phospho-beta-D-ribosyl)anthranilate + diphosphate = 5-phospho-alpha-D-ribose 1-diphosphate + anthranilate. Its pathway is amino-acid biosynthesis; L-tryptophan biosynthesis; L-tryptophan from chorismate: step 2/5. Functionally, catalyzes the transfer of the phosphoribosyl group of 5-phosphorylribose-1-pyrophosphate (PRPP) to anthranilate to yield N-(5'-phosphoribosyl)-anthranilate (PRA). The chain is Anthranilate phosphoribosyltransferase from Rhodopseudomonas palustris (strain TIE-1).